Consider the following 211-residue polypeptide: Glycerol-3-phosphate acyltransferase (211 aa).

Helical transmembrane passes span 10 to 30 (FTTW…FGLL), 63 to 83 (ALTL…IKFL), 90 to 110 (NIFI…PVWL), 126 to 146 (LGLY…LFLI), and 152 to 172 (LSAL…YPYL).

It belongs to the PlsY family. As to quaternary structure, probably interacts with PlsX.

The protein localises to the cell inner membrane. The enzyme catalyses an acyl phosphate + sn-glycerol 3-phosphate = a 1-acyl-sn-glycero-3-phosphate + phosphate. It functions in the pathway lipid metabolism; phospholipid metabolism. In terms of biological role, catalyzes the transfer of an acyl group from acyl-phosphate (acyl-PO(4)) to glycerol-3-phosphate (G3P) to form lysophosphatidic acid (LPA). This enzyme utilizes acyl-phosphate as fatty acyl donor, but not acyl-CoA or acyl-ACP. This is Glycerol-3-phosphate acyltransferase from Bartonella henselae (strain ATCC 49882 / DSM 28221 / CCUG 30454 / Houston 1) (Rochalimaea henselae).